The chain runs to 242 residues: uncharacterized protein (242 aa).

A run of 2 helical transmembrane segments spans residues 4–24 and 34–54; these read NYQVSLIFSVIYVVTNSYYVV and LLFGSFYLTMEVFQTLQWLFG. A glycan (N-linked (GlcNAc...) asparagine; by host) is linked at Asn-73. The next 3 helical transmembrane spans lie at 74 to 94, 106 to 126, and 162 to 182; these read YTIVAFILIWLQPILFSVIGY, VLTVLNCFVFFYGLKLLYGGF, and LDVFPNHLTYIILCIISFVMY. Asn-185 carries an N-linked (GlcNAc...) asparagine; by host glycan. 2 consecutive transmembrane segments (helical) span residues 189-209 and 217-237; these read VIGLGWLLSLIVTKLLLAPTL and CLLSIIANLLIVAYVHISTGI.

The protein localises to the membrane. This is an uncharacterized protein from Acanthamoeba polyphaga mimivirus (APMV).